The chain runs to 374 residues: uncharacterized protein (374 aa).

29 to 36 (GSLNSGKS) provides a ligand contact to ATP.

It belongs to the archaeal ATPase family.

This is an uncharacterized protein from Methanocaldococcus jannaschii (strain ATCC 43067 / DSM 2661 / JAL-1 / JCM 10045 / NBRC 100440) (Methanococcus jannaschii).